Consider the following 333-residue polypeptide: Taste receptor type 2 member 38 (333 aa).

The Extracellular portion of the chain corresponds to 1–17 (MLTLTRIHTVSYEVRST). Residues 18–38 (FLFISVLEFAVGFLTNAFVFL) form a helical membrane-spanning segment. The Cytoplasmic segment spans residues 39-55 (VNFWDVVKRQPLSNSDC). The helical transmembrane segment at 56-76 (VLLCLSISRLFLHGLLFLSAI) threads the bilayer. The Extracellular portion of the chain corresponds to 77–94 (QLTHFQKLSEPLNHSYQA). Residues 95 to 115 (INMLWMIANQANLWLAACLSL) traverse the membrane as a helical segment. Residues 116–142 (LYCSKLIRFSHTFLICLASWVSRKISQ) lie on the Cytoplasmic side of the membrane. A helical membrane pass occupies residues 143-163 (MLLGIILCSCICTVLCVWCFF). At 164–190 (SRPHFTVTTVLFMNNNTRLNWQIKDLN) the chain is on the extracellular side. N-linked (GlcNAc...) asparagine glycosylation is present at asparagine 178. Residues 191–211 (LFYSFLFCYLWSVPPFLLFLV) form a helical membrane-spanning segment. Topologically, residues 212-251 (SSGMLTVSLGRHMRTMKVYTRDSRDPSLEAHIKALKSLVS) are cytoplasmic. Residues 252–272 (FFCFFVISSCAAFISVPLLIL) form a helical membrane-spanning segment. At 273-276 (WRDK) the chain is on the extracellular side. Residues 277-297 (IGVMVCVGIMAACPSGHAAVL) traverse the membrane as a helical segment. The Cytoplasmic segment spans residues 298-333 (ISGNAKLRRAVTTILLWAQSSLKVRADHKADSRTLC).

This sequence belongs to the G-protein coupled receptor T2R family.

The protein localises to the membrane. Receptor that may play a role in the perception of bitterness and is gustducin-linked. May play a role in sensing the chemical composition of the gastrointestinal content. The activity of this receptor may stimulate alpha gustducin, mediate PLC-beta-2 activation and lead to the gating of TRPM5. This chain is Taste receptor type 2 member 38 (TAS2R38), found in Pan paniscus (Pygmy chimpanzee).